Reading from the N-terminus, the 117-residue chain is Photosystem II reaction center Psb28 protein (117 aa).

Belongs to the Psb28 family. In terms of assembly, part of the photosystem II complex.

The protein resides in the cellular thylakoid membrane. The sequence is that of Photosystem II reaction center Psb28 protein from Prochlorococcus marinus (strain MIT 9211).